The sequence spans 245 residues: Zinc finger CCCH domain-containing protein 54 (245 aa).

The segment at 92 to 119 (TYCAVACPAFRNGACHRGDSCEFAHGVF) adopts a C3H1-type zinc-finger fold. The tract at residues 175–204 (GNGDGVTMRMDDEGYDTSRSPVRSGKDDLD) is disordered.

Interacts with MARD1/FLZ9 and RD21A. In terms of tissue distribution, specifically expressed in embryo (at protein level).

The protein resides in the nucleus. Functionally, embryo-specific transcription factor required at the globular to heart stage transition in embryo development. In Arabidopsis thaliana (Mouse-ear cress), this protein is Zinc finger CCCH domain-containing protein 54.